The sequence spans 30 residues: Alpha-defensin PhD-4 (30 aa).

Intrachain disulfides connect Cys-2/Cys-30, Cys-4/Cys-19, and Cys-9/Cys-29.

The protein localises to the secreted. In terms of biological role, in low salt conditions, has antibacterial activity against the Gram-negative bacterium E.coli ML35p (MIC=2.4 uM), the Gram-positive bacteria L.monocytogenes EGD (MIC=2.2 uM) and methicillin-resistant S.aureus ATCC 33591 (MIC=3.5 uM), and the fungus C.albicans 820 (MIC=3.9 uM). At high physiological salt concentrations the antimicrobial activity decreases significantly: E.coli ML35p (MIC=7.1 uM), L.monocytogenes EGD (MIC=1.8 uM), S.aureus ATCC 33591 (MIC=&gt;50 uM), and C.albicans 820 (MIC=&gt;50 uM). The protein is Alpha-defensin PhD-4 of Papio hamadryas (Hamadryas baboon).